The sequence spans 337 residues: Protein BIG GRAIN 1-like (337 aa).

Disordered stretches follow at residues 1–32 (MRDM…PSFS), 120–163 (SAAG…RPAS), and 179–233 (KRPS…ARPS). Basic and acidic residues predominate over residues 137–146 (HEQPDVEKTA). Composition is skewed to low complexity over residues 150–163 (PGSA…RPAS), 195–209 (PACS…SSYA), and 219–230 (RTPPTTTTTARA).

It belongs to the BIG GRAIN 1 (BG1) plant protein family.

Its subcellular location is the cell membrane. Its function is as follows. Involved in auxin transport. Regulator of the auxin signaling pathway. This is Protein BIG GRAIN 1-like from Oryza sativa subsp. indica (Rice).